A 188-amino-acid chain; its full sequence is dCTP deaminase (188 aa).

DCTP-binding positions include 111–116 (KSTYAR), 135–137 (TLE), glutamine 156, tyrosine 170, and glutamine 180. Glutamate 137 serves as the catalytic Proton donor/acceptor.

It belongs to the dCTP deaminase family. Homotrimer.

The catalysed reaction is dCTP + H2O + H(+) = dUTP + NH4(+). Its pathway is pyrimidine metabolism; dUMP biosynthesis; dUMP from dCTP (dUTP route): step 1/2. Functionally, catalyzes the deamination of dCTP to dUTP. This Nitrosomonas europaea (strain ATCC 19718 / CIP 103999 / KCTC 2705 / NBRC 14298) protein is dCTP deaminase.